A 183-amino-acid polypeptide reads, in one-letter code: Nucleoside triphosphate pyrophosphatase (183 aa).

The Proton acceptor role is filled by D71.

It belongs to the Maf family. Requires a divalent metal cation as cofactor.

The protein localises to the cytoplasm. It carries out the reaction a ribonucleoside 5'-triphosphate + H2O = a ribonucleoside 5'-phosphate + diphosphate + H(+). It catalyses the reaction a 2'-deoxyribonucleoside 5'-triphosphate + H2O = a 2'-deoxyribonucleoside 5'-phosphate + diphosphate + H(+). In terms of biological role, nucleoside triphosphate pyrophosphatase. May have a dual role in cell division arrest and in preventing the incorporation of modified nucleotides into cellular nucleic acids. The polypeptide is Nucleoside triphosphate pyrophosphatase (Campylobacter jejuni subsp. jejuni serotype O:6 (strain 81116 / NCTC 11828)).